Reading from the N-terminus, the 821-residue chain is Zinc finger protein 41 (821 aa).

Positions 1-55 (MAANGDSPPWSPALAAEGRGSSCEVRRERTPEARIHSVKRYPDLSPGPKGRSSAD) are disordered. Residues 24 to 35 (EVRRERTPEARI) show a composition bias toward basic and acidic residues. The KRAB domain occupies 69 to 140 (VSFEDVTVDF…EGEAPHQSCS (72 aa)). A Glycyl lysine isopeptide (Lys-Gly) (interchain with G-Cter in SUMO2) cross-link involves residue K120. A C2H2-type 1 zinc finger spans residues 313-335 (YVCTECVMGFTQKSHLFEHQRIH). The C2H2-type 2; degenerate zinc-finger motif lies at 341-364 (RECDKSNKVFPQKPQVDVHPSVYT). 10 consecutive C2H2-type zinc fingers follow at residues 369–391 (YLCT…QKIH), 397–419 (YKCS…LRIH), 425–447 (YECS…QKTH), 453–475 (YECN…QRIH), 481–503 (YVCA…QRIH), 509–531 (YECS…QRIH), 537–559 (YICT…QKTH), 565–587 (YMCA…QKTH), 593–615 (YKCN…QKSH), and 621–643 (YECK…QRIH). K647 participates in a covalent cross-link: Glycyl lysine isopeptide (Lys-Gly) (interchain with G-Cter in SUMO2). C2H2-type zinc fingers lie at residues 649 to 671 (YVCP…HRIH), 677 to 699 (YECS…QKIH), 705 to 727 (NICA…QKIH), 733 to 755 (YECG…QKSH), 761 to 783 (YECS…QIIH), and 789 to 811 (YACT…QKMH).

The protein belongs to the krueppel C2H2-type zinc-finger protein family. As to expression, expressed in the heart, brain, placenta, lung, liver, skeletal muscle, kidney and pancreas.

The protein resides in the nucleus. May be involved in transcriptional regulation. The polypeptide is Zinc finger protein 41 (ZNF41) (Homo sapiens (Human)).